The sequence spans 745 residues: Junction plakoglobin (745 aa).

M1 carries the post-translational modification N-acetylmethionine. T14 carries O-linked (GlcNAc) threonine glycosylation. Phosphoserine is present on residues S99 and S125. ARM repeat units follow at residues 132–171 (NYQDDAELATRALPELTKLLNDEDPVVVTKAAMIVNQLSK), 172–215 (KEAS…LSHH), 216–255 (REGLLAIFKSGGIPALVRMLSSPVESVLFYAITTLHNLLL), 258–297 (EGAKMAVRLADGLQKMVPLLNKNNPKFLAITTDCLQLLAY), 298–341 (GNQE…LSVC), 342–381 (PSNKPAIVEAGGMQALGKHLTSNSPRLVQNCLWTLRNLSD), 383–420 (ATKQEGLESVLKILVNQLSVDDVNVLTCATGTLSNLTC), 423–464 (SKNK…HLTS), 470–510 (EMAQ…NLAL), 512–551 (PANHAPLQEAAVIPRLVQLLVKAHQDAQRHVAAGTQQPYT), 574–613 (PMNRMEIFRLNTIPLFVQLLYSSVENIQRVAAGVLCELAQ), and 615–661 (KEAA…PDYR). Residues 132–297 (NYQDDAELAT…TTDCLQLLAY (166 aa)) are interaction with DSC1 and DSG1. S182 is modified (phosphoserine). Residues 574–661 (PMNRMEIFRL…ISEDKNPDYR (88 aa)) form an interaction with DSC1 region. S665 and S730 each carry phosphoserine.

Belongs to the beta-catenin family. As to quaternary structure, homodimer. Component of an E-cadherin/catenin adhesion complex composed of at least E-cadherin/CDH1 and gamma-catenin/JUP, and possibly alpha-catenin/CTNNA1; the complex is located to adherens junctions. The stable association of CTNNA1 is controversial as CTNNA1 was shown not to bind to F-actin when assembled in the complex. Interacts with MUC1. Interacts with CAV1. Interacts with PTPRJ. Interacts with DSG1. Interacts with DSC1 and DSC2. Interacts with PKP2. Interacts with PKP3 (via N-terminus); the interaction is required for PKP3 localization to desmosome cell-cell junctions. Interacts with DSG4. May be phosphorylated by FER.

Its subcellular location is the cell junction. The protein resides in the adherens junction. The protein localises to the desmosome. It localises to the cytoplasm. It is found in the cytoskeleton. Its subcellular location is the cell membrane. The protein resides in the nucleus. Its function is as follows. Common junctional plaque protein. The membrane-associated plaques are architectural elements in an important strategic position to influence the arrangement and function of both the cytoskeleton and the cells within the tissue. The presence of plakoglobin in both the desmosomes and in the intermediate junctions suggests that it plays a central role in the structure and function of submembranous plaques. Acts as a substrate for VE-PTP and is required by it to stimulate VE-cadherin function in endothelial cells. Can replace beta-catenin in E-cadherin/catenin adhesion complexes which are proposed to couple cadherins to the actin cytoskeleton. This Bos taurus (Bovine) protein is Junction plakoglobin.